Reading from the N-terminus, the 514-residue chain is 2,3-bisphosphoglycerate-independent phosphoglycerate mutase (514 aa).

2 residues coordinate Mn(2+): Asp14 and Ser64. Ser64 acts as the Phosphoserine intermediate in catalysis. Residues His125, 155–156 (RD), Arg187, Arg193, 263–266 (RADR), and Lys336 contribute to the substrate site. The Mn(2+) site is built by Asp403, His407, Asp444, His445, and His463.

This sequence belongs to the BPG-independent phosphoglycerate mutase family. Monomer. Requires Mn(2+) as cofactor.

It carries out the reaction (2R)-2-phosphoglycerate = (2R)-3-phosphoglycerate. It participates in carbohydrate degradation; glycolysis; pyruvate from D-glyceraldehyde 3-phosphate: step 3/5. Its function is as follows. Catalyzes the interconversion of 2-phosphoglycerate and 3-phosphoglycerate. This chain is 2,3-bisphosphoglycerate-independent phosphoglycerate mutase, found in Salmonella paratyphi A (strain ATCC 9150 / SARB42).